A 345-amino-acid chain; its full sequence is Serine proteinase inhibitor 2 (345 aa).

It belongs to the serpin family. Poxviruses subfamily.

It localises to the host cytoplasm. Functionally, viral serpin that inhibits both cysteine and serine proteinases involved in the regulation of host inflammatory and apoptosis processes. Major anti-apoptotic protein which inhibits both intrinsic and extrinsic pathways and strongly cleaves host CASP1 and CASP8 but is a rather poor inhibitor of host CASP3. Prevents the proteolytic activity of host interleukin-1-beta converting enzyme (ICE) and ICE-like enzymes. Can also block apoptosis through host tumor necrosis factor (TNF) receptor. The inhibition of host ICE is an example of a 'cross-class' interaction, in which a serpin inhibits a non-serine proteinase. Also inhibits granzyme B. The chain is Serine proteinase inhibitor 2 (OPG199) from Rabbitpox virus (strain Utrecht) (RPV).